A 152-amino-acid polypeptide reads, in one-letter code: Superoxide dismutase [Cu-Zn] (152 aa).

Residues His-44, His-46, and His-61 each coordinate Cu cation. His-61, His-69, His-78, and Asp-81 together coordinate Zn(2+). Cu cation is bound at residue His-118.

The protein belongs to the Cu-Zn superoxide dismutase family. Homodimer. Cu cation is required as a cofactor. It depends on Zn(2+) as a cofactor.

The protein localises to the cytoplasm. The catalysed reaction is 2 superoxide + 2 H(+) = H2O2 + O2. Functionally, destroys radicals which are normally produced within the cells and which are toxic to biological systems. This Drosophila pseudoobscura pseudoobscura (Fruit fly) protein is Superoxide dismutase [Cu-Zn].